A 448-amino-acid polypeptide reads, in one-letter code: Packaging protein 1 (448 aa).

Residues 1–76 (METKGRRSAA…SQPAKRGGLL (76 aa)) form a disordered region. A compositionally biased stretch (basic residues) spans 22–31 (PRKRPTRRAP). Polar residues predominate over residues 56-67 (RPSSDSLLQEPS). 171–178 (GPTGCGKS) contacts ATP. Positions 440-448 (RAYRARKIK) are DNA-binding.

It belongs to the adenoviridae packaging protein 1 family. In terms of assembly, homodimer. Part of a genome packaging complex composed of packaging proteins 1, 2 and 3; this complex specifically binds to the packaging sequence on the left end of viral genomic DNA and performs packaging of the viral genome. Interacts with protein 33K.

The protein resides in the virion. Its subcellular location is the host nucleus. It localises to the host nucleoplasm. The protein localises to the host nucleolus. In terms of biological role, component of the packaging machinery which encapsidates the viral DNA into preformed capsids and transcriptional activator of the viral major late promoter (MLP). Binds, along with packaging proteins 2 and 3, to the specific packaging sequence on the left end of viral genomic DNA and displays ATPase activity thereby providing the power stroke of the packaging machinery. The activity of packaging protein IVa2 is stimulated by protein 33K which acts as a terminase. May be the protein that pumps DNA into the capsid powered by ATP hydrolysis. Specifically binds to the 5'-CG-3' nucleotides of the repeats making up the packaging sequence. Component of the DEF-A and DEF-B transcription factors that bind downstream elements of the major late promoter (MLP), and stimulate transcription from the MLP after initiation of viral DNA replication. DEF-A is a heterodimer packaging proteins 1 and 2 and DEF-B is a homodimer of packaging protein 1. The chain is Packaging protein 1 from Human adenovirus B serotype 7 (HAdV-7).